A 258-amino-acid chain; its full sequence is Isoprenyl transferase 2 (258 aa).

Asp-35 is an active-site residue. Asp-35 contacts Mg(2+). Residues 36–39 (GNRR), Trp-40, Arg-50, and 81–83 (SDD) contribute to the substrate site. Asn-84 functions as the Proton acceptor in the catalytic mechanism. Substrate is bound by residues Arg-87, Arg-207, and 213–215 (RLS). Position 226 (Glu-226) interacts with Mg(2+).

This sequence belongs to the UPP synthase family. Homodimer. Requires Mg(2+) as cofactor.

Functionally, catalyzes the condensation of isopentenyl diphosphate (IPP) with allylic pyrophosphates generating different type of terpenoids. This chain is Isoprenyl transferase 2, found in Streptomyces coelicolor (strain ATCC BAA-471 / A3(2) / M145).